The following is a 557-amino-acid chain: Dihydroxy-acid dehydratase (557 aa).

D78 is a binding site for Mg(2+). A [2Fe-2S] cluster-binding site is contributed by C119. 2 residues coordinate Mg(2+): D120 and K121. The residue at position 121 (K121) is an N6-carboxylysine. Residue C192 coordinates [2Fe-2S] cluster. E446 provides a ligand contact to Mg(2+). Catalysis depends on S472, which acts as the Proton acceptor.

It belongs to the IlvD/Edd family. Homodimer. [2Fe-2S] cluster is required as a cofactor. Requires Mg(2+) as cofactor.

It carries out the reaction (2R)-2,3-dihydroxy-3-methylbutanoate = 3-methyl-2-oxobutanoate + H2O. The enzyme catalyses (2R,3R)-2,3-dihydroxy-3-methylpentanoate = (S)-3-methyl-2-oxopentanoate + H2O. Its pathway is amino-acid biosynthesis; L-isoleucine biosynthesis; L-isoleucine from 2-oxobutanoate: step 3/4. It functions in the pathway amino-acid biosynthesis; L-valine biosynthesis; L-valine from pyruvate: step 3/4. Functionally, functions in the biosynthesis of branched-chain amino acids. Catalyzes the dehydration of (2R,3R)-2,3-dihydroxy-3-methylpentanoate (2,3-dihydroxy-3-methylvalerate) into 2-oxo-3-methylpentanoate (2-oxo-3-methylvalerate) and of (2R)-2,3-dihydroxy-3-methylbutanoate (2,3-dihydroxyisovalerate) into 2-oxo-3-methylbutanoate (2-oxoisovalerate), the penultimate precursor to L-isoleucine and L-valine, respectively. The protein is Dihydroxy-acid dehydratase of Campylobacter curvus (strain 525.92).